The sequence spans 75 residues: Beta-defensin 42 (75 aa).

Positions 1–21 (MNLRLSCLLFILVTSLPAGRC) are cleaved as a signal peptide. Cystine bridges form between Cys-33-Cys-60, Cys-40-Cys-54, and Cys-44-Cys-61.

The protein belongs to the beta-defensin family. Epididymis-specific, with highest levels in the initial segment and distal caput.

It is found in the secreted. In terms of biological role, has bactericidal activity. May play a role in the antimicrobial protection of sperm and urogenital tract epithelia. This chain is Beta-defensin 42, found in Mus musculus (Mouse).